The chain runs to 210 residues: Glutathione S-transferase P (210 aa).

Positions Pro2–Gly81 constitute a GST N-terminal domain. A Phosphotyrosine; by EGFR modification is found at Tyr4. Residues Tyr8, Arg14, Trp39, Lys45, and Gln52 to Leu53 contribute to the glutathione site. At Thr62 the chain carries Phosphothreonine. Gln65–Ser66 contributes to the glutathione binding site. Residues Asp83–Ile204 enclose the GST C-terminal domain. N6-succinyllysine occurs at positions 103 and 116. An N6-acetyllysine modification is found at Lys128.

Belongs to the GST superfamily. Pi family. As to quaternary structure, homodimer. Interacts with CDK5. Present in kidney, lung, testis and placenta, very low levels in liver.

The protein resides in the cytoplasm. The protein localises to the mitochondrion. It localises to the nucleus. It catalyses the reaction RX + glutathione = an S-substituted glutathione + a halide anion + H(+). The enzyme catalyses prostaglandin J2 + glutathione = prostaglandin J2-S-(R)-glutathione. The catalysed reaction is prostaglandin J2 + glutathione = prostaglandin J2-S-(S)-glutathione. It carries out the reaction prostaglandin A2 + glutathione = prostaglandin A2-S-(S)-glutathione. It catalyses the reaction 11(S)-hydroxy-14(S),15(S)-epoxy-(5Z,8Z,12E)-eicosatrienoate + glutathione = (11S,15S)-dihydroxy-14(R)-S-glutathionyl-(5Z,8Z,12E)-eicosatrienoate. Its function is as follows. Conjugation of reduced glutathione to a wide number of exogenous and endogenous hydrophobic electrophiles. Involved in the formation of glutathione conjugates of both prostaglandin A2 (PGA2) and prostaglandin J2 (PGJ2). Participates in the formation of novel hepoxilin regioisomers. Negatively regulates CDK5 activity via p25/p35 translocation to prevent neurodegeneration. The polypeptide is Glutathione S-transferase P (Rattus norvegicus (Rat)).